The following is a 348-amino-acid chain: Dihydroorotase (348 aa).

2 residues coordinate Zn(2+): histidine 14 and histidine 16. Substrate contacts are provided by residues 16 to 18 (HLR) and asparagine 42. Zn(2+) contacts are provided by lysine 100, histidine 137, and histidine 175. Lysine 100 carries the N6-carboxylysine modification. Histidine 137 provides a ligand contact to substrate. Residue leucine 220 participates in substrate binding. Residue aspartate 248 participates in Zn(2+) binding. The active site involves aspartate 248. The substrate site is built by histidine 252 and alanine 264.

This sequence belongs to the metallo-dependent hydrolases superfamily. DHOase family. Class II DHOase subfamily. Homodimer. The cofactor is Zn(2+).

It catalyses the reaction (S)-dihydroorotate + H2O = N-carbamoyl-L-aspartate + H(+). The protein operates within pyrimidine metabolism; UMP biosynthesis via de novo pathway; (S)-dihydroorotate from bicarbonate: step 3/3. In terms of biological role, catalyzes the reversible cyclization of carbamoyl aspartate to dihydroorotate. The chain is Dihydroorotase from Pseudomonas putida (strain GB-1).